The following is a 396-amino-acid chain: S-adenosylmethionine synthase (396 aa).

Residue His-14 coordinates ATP. Asp-16 serves as a coordination point for Mg(2+). Glu-42 provides a ligand contact to K(+). Residues Glu-55 and Gln-98 each contribute to the L-methionine site. The segment at 98-108 (QSPDIALGVNE) is flexible loop. Residues 174–176 (DGK), 241–242 (RF), Asp-250, 256–257 (RK), Ala-273, and Lys-277 each bind ATP. Asp-250 serves as a coordination point for L-methionine. An L-methionine-binding site is contributed by Lys-281.

This sequence belongs to the AdoMet synthase family. In terms of assembly, homotetramer; dimer of dimers. The cofactor is Mg(2+). Requires K(+) as cofactor.

Its subcellular location is the cytoplasm. The catalysed reaction is L-methionine + ATP + H2O = S-adenosyl-L-methionine + phosphate + diphosphate. The protein operates within amino-acid biosynthesis; S-adenosyl-L-methionine biosynthesis; S-adenosyl-L-methionine from L-methionine: step 1/1. In terms of biological role, catalyzes the formation of S-adenosylmethionine (AdoMet) from methionine and ATP. The overall synthetic reaction is composed of two sequential steps, AdoMet formation and the subsequent tripolyphosphate hydrolysis which occurs prior to release of AdoMet from the enzyme. The protein is S-adenosylmethionine synthase of Fervidobacterium nodosum (strain ATCC 35602 / DSM 5306 / Rt17-B1).